The sequence spans 156 residues: Small ribosomal subunit protein uS7 (156 aa).

The protein belongs to the universal ribosomal protein uS7 family. In terms of assembly, part of the 30S ribosomal subunit. Contacts proteins S9 and S11.

One of the primary rRNA binding proteins, it binds directly to 16S rRNA where it nucleates assembly of the head domain of the 30S subunit. Is located at the subunit interface close to the decoding center, probably blocks exit of the E-site tRNA. The protein is Small ribosomal subunit protein uS7 of Neisseria meningitidis serogroup C (strain 053442).